A 460-amino-acid chain; its full sequence is Putative type II methyltransferase M.OihORF3336P (460 aa).

The SAM-dependent MTase C5-type domain occupies 15–458 (PEVVDLFSGC…EAMKKNIQGG (444 aa)). Residue cysteine 97 is part of the active site.

This sequence belongs to the class I-like SAM-binding methyltransferase superfamily. C5-methyltransferase family.

It catalyses the reaction a 2'-deoxycytidine in DNA + S-adenosyl-L-methionine = a 5-methyl-2'-deoxycytidine in DNA + S-adenosyl-L-homocysteine + H(+). Functionally, a methylase, recognizes the double-stranded sequence 5'-ACCGGT-3', methylates C-? on both strands. No endonuclease has been identified for this methylase. This Oceanobacillus iheyensis (strain DSM 14371 / CIP 107618 / JCM 11309 / KCTC 3954 / HTE831) protein is Putative type II methyltransferase M.OihORF3336P.